We begin with the raw amino-acid sequence, 470 residues long: Nuclear receptor ROR-beta (470 aa).

A DNA-binding region (nuclear receptor) is located at residues 18–93 (VIPCKICGDK…LGMSRDAVKF (76 aa)). 2 NR C4-type zinc fingers span residues 21-41 (CKICGDKSSGIHYGVITCEGC) and 57-81 (CPRQRNCLIDRTNRNRCQHCRLQKC). Residues 104–117 (LYAEVQKHQQRLQE) are compositionally biased toward basic and acidic residues. Positions 104-127 (LYAEVQKHQQRLQEQRQQQSGEAE) are disordered. The NR LBD domain maps to 222-460 (EIDRIAQNII…TLFPPLYKEL (239 aa)). Residues 456-461 (LYKELF) carry the AF-2 motif.

The protein belongs to the nuclear hormone receptor family. NR1 subfamily. Monomer. Interacts with CRX.

The protein localises to the nucleus. Its subcellular location is the nucleoplasm. Its function is as follows. Nuclear receptor that binds DNA as a monomer to ROR response elements (RORE) containing a single core motif half-site 5'-AGGTCA-3' preceded by a short A-T-rich sequence. Considered to have intrinsic transcriptional activity, have some natural ligands such as all-trans retinoic acid (ATRA) and other retinoids which act as inverse agonists repressing the transcriptional activity. Required for normal postnatal development of rod and cone photoreceptor cells. Modulates rod photoreceptors differentiation at least by inducing the transcription factor NRL-mediated pathway. In cone photoreceptor cells, regulates transcription of OPN1SW. Involved in the regulation of the period length and stability of the circadian rhythm. May control cytoarchitectural patterning of neocortical neurons during development. May act in a dose-dependent manner to regulate barrel formation upon innervation of layer IV neurons by thalamocortical axons. May play a role in the suppression of osteoblastic differentiation through the inhibition of RUNX2 transcriptional activity. Functionally, isoform 1 is critical for hindlimb motor control and for the differentiation of amacrine and horizontal cells in the retina. Regulates the expression of PTF1A synergistically with FOXN4. The protein is Nuclear receptor ROR-beta (RORB) of Homo sapiens (Human).